Here is a 353-residue protein sequence, read N- to C-terminus: Histidinol-phosphate aminotransferase (353 aa).

An N6-(pyridoxal phosphate)lysine modification is found at Lys211.

It belongs to the class-II pyridoxal-phosphate-dependent aminotransferase family. Histidinol-phosphate aminotransferase subfamily. Homodimer. The cofactor is pyridoxal 5'-phosphate.

It carries out the reaction L-histidinol phosphate + 2-oxoglutarate = 3-(imidazol-4-yl)-2-oxopropyl phosphate + L-glutamate. Its pathway is amino-acid biosynthesis; L-histidine biosynthesis; L-histidine from 5-phospho-alpha-D-ribose 1-diphosphate: step 7/9. In Klebsiella pneumoniae subsp. pneumoniae (strain ATCC 700721 / MGH 78578), this protein is Histidinol-phosphate aminotransferase.